Consider the following 141-residue polypeptide: Aspartate 1-decarboxylase (141 aa).

The active-site Schiff-base intermediate with substrate; via pyruvic acid is the Ser-25. Ser-25 bears the Pyruvic acid (Ser) mark. Residue Thr-57 coordinates substrate. Tyr-58 serves as the catalytic Proton donor. Position 73-75 (73-75 (GAA)) interacts with substrate.

It belongs to the PanD family. In terms of assembly, heterooctamer of four alpha and four beta subunits. Requires pyruvate as cofactor. Is synthesized initially as an inactive proenzyme, which is activated by self-cleavage at a specific serine bond to produce a beta-subunit with a hydroxyl group at its C-terminus and an alpha-subunit with a pyruvoyl group at its N-terminus.

It is found in the cytoplasm. It carries out the reaction L-aspartate + H(+) = beta-alanine + CO2. It functions in the pathway cofactor biosynthesis; (R)-pantothenate biosynthesis; beta-alanine from L-aspartate: step 1/1. Its function is as follows. Catalyzes the pyruvoyl-dependent decarboxylation of aspartate to produce beta-alanine. The sequence is that of Aspartate 1-decarboxylase from Salinispora arenicola (strain CNS-205).